The following is a 639-amino-acid chain: UvrABC system protein C (639 aa).

Positions 31-109 (EQAGVYRMYD…IKKYQPKYNI (79 aa)) constitute a GIY-YIG domain. Residues 218–253 (SAVIEQLVARMELASNELHFELAAKYRDQIVTLRKV) enclose the UVR domain.

It belongs to the UvrC family. In terms of assembly, interacts with UvrB in an incision complex.

Its subcellular location is the cytoplasm. The UvrABC repair system catalyzes the recognition and processing of DNA lesions. UvrC both incises the 5' and 3' sides of the lesion. The N-terminal half is responsible for the 3' incision and the C-terminal half is responsible for the 5' incision. This Colwellia psychrerythraea (strain 34H / ATCC BAA-681) (Vibrio psychroerythus) protein is UvrABC system protein C.